The following is a 515-amino-acid chain: Bifunctional pantoate ligase/cytidylate kinase (515 aa).

The tract at residues 1–279 is pantoate--beta-alanine ligase; the sequence is MKVVETVARL…VGSTRLIDNV (279 aa). Residue 31–38 participates in ATP binding; it reads MGALHEGH. Catalysis depends on histidine 38, which acts as the Proton donor. Glutamine 62 serves as a coordination point for (R)-pantoate. Glutamine 62 lines the beta-alanine pocket. Residue 149–152 participates in ATP binding; the sequence is GQKD. Glutamine 155 provides a ligand contact to (R)-pantoate. ATP is bound by residues valine 178 and 186-189; that span reads LSSR. The interval 280-515 is cytidylate kinase; sequence VLGQHHERRP…LYRDKVGGSV (236 aa).

It in the N-terminal section; belongs to the pantothenate synthetase family. In the C-terminal section; belongs to the cytidylate kinase family. Type 1 subfamily.

Its subcellular location is the cytoplasm. The catalysed reaction is (R)-pantoate + beta-alanine + ATP = (R)-pantothenate + AMP + diphosphate + H(+). It catalyses the reaction CMP + ATP = CDP + ADP. The enzyme catalyses dCMP + ATP = dCDP + ADP. It functions in the pathway cofactor biosynthesis; (R)-pantothenate biosynthesis; (R)-pantothenate from (R)-pantoate and beta-alanine: step 1/1. Functionally, catalyzes the condensation of pantoate with beta-alanine in an ATP-dependent reaction via a pantoyl-adenylate intermediate. In terms of biological role, catalyzes the transfer of a phosphate group from ATP to either CMP or dCMP to form CDP or dCDP and ADP, respectively. In Gloeobacter violaceus (strain ATCC 29082 / PCC 7421), this protein is Bifunctional pantoate ligase/cytidylate kinase.